A 347-amino-acid polypeptide reads, in one-letter code: Inositol 2-dehydrogenase (347 aa).

The protein belongs to the Gfo/Idh/MocA family. As to quaternary structure, homotetramer.

The enzyme catalyses myo-inositol + NAD(+) = scyllo-inosose + NADH + H(+). Functionally, involved in the oxidation of myo-inositol (MI) to 2-keto-myo-inositol (2KMI or 2-inosose). The sequence is that of Inositol 2-dehydrogenase from Rubrobacter xylanophilus (strain DSM 9941 / JCM 11954 / NBRC 16129 / PRD-1).